Consider the following 262-residue polypeptide: tRNA pseudouridine synthase A (262 aa).

Aspartate 51 functions as the Nucleophile in the catalytic mechanism. Tyrosine 109 serves as a coordination point for substrate.

This sequence belongs to the tRNA pseudouridine synthase TruA family. In terms of assembly, homodimer.

The enzyme catalyses uridine(38/39/40) in tRNA = pseudouridine(38/39/40) in tRNA. Functionally, formation of pseudouridine at positions 38, 39 and 40 in the anticodon stem and loop of transfer RNAs. This Aliivibrio fischeri (strain ATCC 700601 / ES114) (Vibrio fischeri) protein is tRNA pseudouridine synthase A.